The chain runs to 177 residues: Probable DNA-directed RNA polymerase subunit delta (177 aa).

Residues 14–81 (CSMIEVVHSV…GENRWGLRSW (68 aa)) enclose the HTH HARE-type domain. The disordered stretch occupies residues 93–177 (PQPKPKKKRK…ETEEEEEEEL (85 aa)). Positions 106 to 177 (DGFDDYIEED…ETEEEEEEEL (72 aa)) are enriched in acidic residues.

It belongs to the RpoE family. In terms of assembly, RNAP is composed of a core of 2 alpha, a beta and a beta' subunits. The core is associated with a delta subunit and one of several sigma factors.

In terms of biological role, participates in both the initiation and recycling phases of transcription. In the presence of the delta subunit, RNAP displays an increased specificity of transcription, a decreased affinity for nucleic acids, and an increased efficiency of RNA synthesis because of enhanced recycling. This is Probable DNA-directed RNA polymerase subunit delta from Bacillus cereus (strain AH187).